Reading from the N-terminus, the 167-residue chain is Homing endonuclease I-ApeII (167 aa).

This sequence belongs to the LAGLIDADG endonuclease family.

Endonuclease involved in rRNA intron I-gamma homing. The sequence is that of Homing endonuclease I-ApeII (apeII) from Aeropyrum pernix (strain ATCC 700893 / DSM 11879 / JCM 9820 / NBRC 100138 / K1).